We begin with the raw amino-acid sequence, 544 residues long: Histone-arginine methyltransferase CARMER (544 aa).

The SAM-dependent MTase PRMT-type domain maps to 150–459 (ASQYFQFYGY…QSYDVTIDLH (310 aa)). The S-adenosyl-L-methionine site is built by glutamine 163, arginine 172, glycine 196, glutamate 218, glutamate 247, and threonine 275. Polar residues predominate over residues 505–520 (DTQQQQQGSRNSNSML). The segment at 505-527 (DTQQQQQGSRNSNSMLNGGLSVN) is disordered. Asymmetric dimethylarginine; by autocatalysis is present on arginine 514.

This sequence belongs to the class I-like SAM-binding methyltransferase superfamily. Protein arginine N-methyltransferase family. As to quaternary structure, homodimer. The dimethylated protein is the major form.

The protein resides in the cytoplasm. It localises to the nucleus. The enzyme catalyses L-arginyl-[protein] + 2 S-adenosyl-L-methionine = N(omega),N(omega)-dimethyl-L-arginyl-[protein] + 2 S-adenosyl-L-homocysteine + 2 H(+). Its function is as follows. Methylates (mono- and asymmetric dimethylation) the guanidino nitrogens of arginyl residues in proteins. May methylate histone H3 at 'Arg-17' and activate transcription via chromatin remodeling. In Drosophila grimshawi (Hawaiian fruit fly), this protein is Histone-arginine methyltransferase CARMER (Art4).